The sequence spans 480 residues: CASP8 and FADD-like apoptosis regulator (480 aa).

2 DED domains span residues 1–73 (MSAE…RILK) and 92–170 (DYRV…KIQK). Residues 1-195 (MSAEVIHQVE…LQAAIQKSFK (195 aa)) form an interaction with CASP8 region. The tract at residues 1 to 227 (MSAEVIHQVE…GTQQEPVKKS (227 aa)) is interaction with FADD. Residues 1–305 (MSAEVIHQVE…FACMPEHRDY (305 aa)) form an interaction with CASP8 propeptide region. Residues 1–435 (MSAEVIHQVE…CLSQKLRQER (435 aa)) form a not proteolytically processed and involved in apoptosis inhibition region. Residues 192–435 (KSFKDPSNNF…CLSQKLRQER (244 aa)) are interaction with CASP3. Residues 192–480 (KSFKDPSNNF…LRKKLIPSYT (289 aa)) form an interaction with TRAF1 and TRAF2 region. Residues 217 to 480 (LGTQQEPVKK…LRKKLIPSYT (264 aa)) form an interaction with CASP8 subunits p18 and p10 region. The interval 263–358 (ETELLRDTFT…AGKPKIFFIQ (96 aa)) is caspase. Residues 370-480 (SSLLEVDGPA…LRKKLIPSYT (111 aa)) are interaction with CASP8.

It belongs to the peptidase C14A family. TNFRSF6 stimulation triggers recruitment to the death-inducing signaling complex (DISC) formed by TNFRSF6, FADD and CASP8. A proteolytic fragment (p43) stays associated with the DISC. Interacts with RIPK1. In terms of processing, proteolytically processed by CASP8 generating subunit p43 and p12.

Apoptosis regulator protein which may function as a crucial link between cell survival and cell death pathways in mammalian cells. Acts as an inhibitor of TNFRSF6 mediated apoptosis. A proteolytic fragment (p43) is likely retained in the death-inducing signaling complex (DISC) thereby blocking further recruitment and processing of caspase-8 at the complex. Full length and shorter isoforms have been shown either to induce apoptosis or to reduce TNFRSF-triggered apoptosis. Lacks enzymatic (caspase) activity. The chain is CASP8 and FADD-like apoptosis regulator (CFLAR) from Pongo abelii (Sumatran orangutan).